Here is a 532-residue protein sequence, read N- to C-terminus: Probable cytochrome P450 524A1 (532 aa).

The helical transmembrane segment at 8 to 28 threads the bilayer; sequence FIIFILLAALAVFVSEATSKV. Position 478 (Cys478) interacts with heme.

This sequence belongs to the cytochrome P450 family. Heme serves as cofactor.

It is found in the membrane. The sequence is that of Probable cytochrome P450 524A1 (cyp524A1) from Dictyostelium discoideum (Social amoeba).